The following is an 819-amino-acid chain: Leucine--tRNA ligase (819 aa).

Positions 40-51 (PYPSGAGLHVGH) match the 'HIGH' region motif. Positions 600–604 (KMSKS) match the 'KMSKS' region motif. K603 contributes to the ATP binding site.

Belongs to the class-I aminoacyl-tRNA synthetase family.

The protein localises to the cytoplasm. The enzyme catalyses tRNA(Leu) + L-leucine + ATP = L-leucyl-tRNA(Leu) + AMP + diphosphate. In Chlamydia trachomatis serovar L2 (strain ATCC VR-902B / DSM 19102 / 434/Bu), this protein is Leucine--tRNA ligase.